A 438-amino-acid chain; its full sequence is 2-(3-amino-3-carboxypropyl)histidine synthase subunit 1 (438 aa).

The tract at residues 1–24 (MAALVVSETAEPGSRVGPGRGRIS) is disordered. [4Fe-4S] cluster contacts are provided by cysteine 110, cysteine 214, and cysteine 342. Positions 402–438 (LCQPASDKVQQGSRGGSPAPACESCNCADQKATSPAP) are disordered. Position 418 is a phosphoserine (serine 418).

Belongs to the DPH1/DPH2 family. DPH1 subfamily. Component of the 2-(3-amino-3-carboxypropyl)histidine synthase complex composed of DPH1, DPH2, DPH3 and a NADH-dependent reductase. Interacts with DPH2. Interacts with RBM8A. It depends on [4Fe-4S] cluster as a cofactor. Strongly expressed in kidney and liver. Moderately expressed in brain, skin and testis. Weakly expressed in heart, lung, small intestine, spleen, stomach and thymus.

The protein localises to the nucleus. The protein resides in the cytoplasm. It catalyses the reaction L-histidyl-[translation elongation factor 2] + S-adenosyl-L-methionine = 2-[(3S)-amino-3-carboxypropyl]-L-histidyl-[translation elongation factor 2] + S-methyl-5'-thioadenosine + H(+). It functions in the pathway protein modification; peptidyl-diphthamide biosynthesis. Its function is as follows. Catalyzes the first step of diphthamide biosynthesis, a post-translational modification of histidine which occurs in elongation factor 2. DPH1 and DPH2 transfer a 3-amino-3-carboxypropyl (ACP) group from S-adenosyl-L-methionine (SAM) to a histidine residue, the reaction is assisted by a reduction system comprising DPH3 and a NADH-dependent reductase. Acts as a tumor suppressor. In Mus musculus (Mouse), this protein is 2-(3-amino-3-carboxypropyl)histidine synthase subunit 1.